Consider the following 344-residue polypeptide: Interactor of constitutive active ROPs 1 (344 aa).

4 disordered regions span residues 1 to 74, 92 to 139, 186 to 218, and 307 to 344; these read MPRP…ESQL, EAVK…KETD, HESL…DEMV, and FMDP…KGQK. The span at 19-29 shows a compositional bias: low complexity; sequence SSSSTSDSNHS. Residues 60-108 are a coiled coil; the sequence is QKKLGGRISDLESQLGQAQEELRLLKEQLANAEAVKKQAQDELHKKSKK. 3 stretches are compositionally biased toward basic and acidic residues: residues 93 to 103, 114 to 139, and 186 to 195; these read AVKKQAQDELH, RVEE…KETD, and HESLGKENES. Residues 145-273 are a coiled coil; the sequence is VEKIAVEEEE…EQWRKAADAA (129 aa). Residues 196-211 show a composition bias toward polar residues; the sequence is LKNQLSDSASEISNVK.

It belongs to the ICR family. In terms of assembly, homooligomer. Interacts with ARAC3, ARAC4, ARAC8, ARAC11 and SEC3A, but not with ICR2 or EXO70A1. As to expression, expressed in mature and germinating pollen. Expressed throughout the embryo but not in the hypophysis and quiescent center (QC). In roots, absent from the QC and the stem cells.

It localises to the cell membrane. The protein localises to the nucleus. Functionally, acts as a scaffold, mediating interaction of ROPs with different proteins. Required for primary and adventitious root maintenance, but not for their formation. Promotes the stabilization of ARAC11 on the plasma membrane of the pollen tube initiation site but not the activation of ARAC11. Regulates directionality of polar auxin transport, and is required for the formation of a stable auxin maximum and tip localized auxin gradient during embryogenesis, organogenesis, and meristem activity. Involved in exocytosis and in the recycling of PIN proteins back to the plasma membrane. In Arabidopsis thaliana (Mouse-ear cress), this protein is Interactor of constitutive active ROPs 1 (ICR1).